The chain runs to 372 residues: MEASSGTAGPAVLLLILALLLTESQGSRSQGTHTLRYDVTACFLEGSEQTRLLVLIYVDDELFLRYNGDRRSAKPWACWIKGHGGDETCTREAENLPKEEERLREMMADMINQKGHDKGPYTLQATLDCELQRNGSTRGFWHLGYEGRNLLTFDQKTLTWTMDVPFTQQKKTFEPRAPKADLVKTFLDETCPARLQRHLASLSNVLPDTGSPVVIVTCRNYPVGRITLTCRAFNLSSRVATLLWLRDGKPVQQDVFGPGTILPSGDGTYQTWVSIRVLPGQEPQFACNLRHSNRTIMQTAVSGESMGWPSASWATRQEAEGPHRTHNDHVVDGGLVTGNANKDSPDASSCATASAISAFPVVVLSVALPRAN.

Positions 1–26 (MEASSGTAGPAVLLLILALLLTESQG) are cleaved as a signal peptide. Residues 28–119 (RSQGTHTLRY…MINQKGHDKG (92 aa)) form an alpha-1 region. 3 disulfides stabilise this stretch: cysteine 78/cysteine 89, cysteine 129/cysteine 191, and cysteine 230/cysteine 287. The segment at 120-210 (PYTLQATLDC…SLSNVLPDTG (91 aa)) is alpha-2. N-linked (GlcNAc...) asparagine glycans are attached at residues asparagine 134, asparagine 234, and asparagine 293. The 111-residue stretch at 192–302 (PARLQRHLAS…NRTIMQTAVS (111 aa)) folds into the Ig-like C1-type domain. The tract at residues 211-339 (SPVVIVTCRN…VVDGGLVTGN (129 aa)) is alpha-3. The disordered stretch occupies residues 308–349 (WPSASWATRQEAEGPHRTHNDHVVDGGLVTGNANKDSPDASS). Residues 317-331 (QEAEGPHRTHNDHVV) are compositionally biased toward basic and acidic residues. Residues 340 to 348 (ANKDSPDAS) form a connecting peptide region. Serine 349 carries the GPI-anchor amidated serine lipid modification. A propeptide spans 350-372 (CATASAISAFPVVVLSVALPRAN) (removed in mature form).

Belongs to the MHC class I family. As to quaternary structure, heterodimer with B2M. In terms of tissue distribution, ubiquitously expressed in neonatal and adult tissues.

The protein localises to the cell membrane. In terms of biological role, binds to heparan sulfate proteoglycans on the surface of fibroblast cells. This is MHC class I-like protein MILL2 from Rattus norvegicus (Rat).